The chain runs to 350 residues: MIKKAIAKVVEREDLTESEMIQVMDQVMSGEATPAQIAAFITALRMKGETVAEITGAARVMRDKVTRIRVGKNILDMDRDDINVDLETILDTCGTGGSCTNTFNVSTTVAFVVSACGVKVAKHGNRSVSSACGSADVLESLGVNLDVTQETIERCINEIGIGFLFAPALHGAMKYAIGPRKEIGIRTIFNILGPLTNPAGAGCQVLGVYREDLVEKLAHVLKNLGCKRGFVVHGQDGMDEMTLTAETRIAEVTPAGVATRLFRPEELGLSRCGMDDLRGGDAAANAVIVRRVLEGEKGPKRDIVLLNAAFGLVAAGRVVDPAAGLTMAAEAIDSGKALAQLEKLVKLTNE.

Residues glycine 94, 97 to 98 (GS), threonine 102, 104 to 107 (NVST), 122 to 130 (KHGNRSVSS), and serine 134 contribute to the 5-phospho-alpha-D-ribose 1-diphosphate site. Position 94 (glycine 94) interacts with anthranilate. Serine 106 serves as a coordination point for Mg(2+). Asparagine 125 provides a ligand contact to anthranilate. Position 180 (arginine 180) interacts with anthranilate. Mg(2+) contacts are provided by aspartate 239 and glutamate 240.

This sequence belongs to the anthranilate phosphoribosyltransferase family. In terms of assembly, homodimer. Requires Mg(2+) as cofactor.

The enzyme catalyses N-(5-phospho-beta-D-ribosyl)anthranilate + diphosphate = 5-phospho-alpha-D-ribose 1-diphosphate + anthranilate. It participates in amino-acid biosynthesis; L-tryptophan biosynthesis; L-tryptophan from chorismate: step 2/5. In terms of biological role, catalyzes the transfer of the phosphoribosyl group of 5-phosphorylribose-1-pyrophosphate (PRPP) to anthranilate to yield N-(5'-phosphoribosyl)-anthranilate (PRA). This chain is Anthranilate phosphoribosyltransferase, found in Geotalea uraniireducens (strain Rf4) (Geobacter uraniireducens).